A 510-amino-acid polypeptide reads, in one-letter code: NAD(P)H-quinone oxidoreductase subunit 2 A, chloroplastic (510 aa).

A run of 12 helical transmembrane segments spans residues 31–51 (FIFP…IDLT), 59–79 (WFYF…LFRW), 99–119 (IFQF…VEYI), 124–144 (MAIT…MFLC), 149–169 (LITI…LSGY), 183–203 (YLLM…WLYG), 229–249 (ISIA…PAPF), 295–315 (WHLL…LLAI), 323–343 (MLAY…IVGD), 354–374 (YMLF…LFGL), 395–415 (ALSL…AGFF), and 418–438 (LYLF…IGLL).

This sequence belongs to the complex I subunit 2 family. In terms of assembly, NDH is composed of at least 16 different subunits, 5 of which are encoded in the nucleus.

It is found in the plastid. The protein resides in the chloroplast thylakoid membrane. It carries out the reaction a plastoquinone + NADH + (n+1) H(+)(in) = a plastoquinol + NAD(+) + n H(+)(out). The catalysed reaction is a plastoquinone + NADPH + (n+1) H(+)(in) = a plastoquinol + NADP(+) + n H(+)(out). Its function is as follows. NDH shuttles electrons from NAD(P)H:plastoquinone, via FMN and iron-sulfur (Fe-S) centers, to quinones in the photosynthetic chain and possibly in a chloroplast respiratory chain. The immediate electron acceptor for the enzyme in this species is believed to be plastoquinone. Couples the redox reaction to proton translocation, and thus conserves the redox energy in a proton gradient. This chain is NAD(P)H-quinone oxidoreductase subunit 2 A, chloroplastic, found in Oryza nivara (Indian wild rice).